Here is a 97-residue protein sequence, read N- to C-terminus: Protein SENESCENCE-ASSOCIATED GENE 21, mitochondrial (97 aa).

The transit peptide at 1–46 (MARSISNVKIVSAFVSRELSNAIFRRGYAATAAQGSVSSGGRSGAV) directs the protein to the mitochondrion.

This sequence belongs to the LEA type 3 family. Expressed in roots, stems leaves and flowers, but not in seeds. In short days, observed in cotyledons and roots but absent from rosette leaves.

The protein localises to the mitochondrion. Its function is as follows. Mediates tolerance to oxidative stresses (e.g. hydrogen peroxide H(2)O(2), diamide, menadione and tert-butyl hydroperoxide) by minimizing the negative effects of oxidation and monitoring photosynthesis during stress. Promotes root development. Prevents premature aging (e.g. senescence and flowering). Involved in resistance against compatible pathogens such as Botrytis cinerea and Pseudomonas syringae pv. tomato. The polypeptide is Protein SENESCENCE-ASSOCIATED GENE 21, mitochondrial (Arabidopsis thaliana (Mouse-ear cress)).